The following is a 178-amino-acid chain: Conodipine-P2 (178 aa).

Residues 1–24 (MKLLAPVLWAMAALGVTWLVAVDS) form the signal peptide. 3 positions are modified to 4-hydroxyproline: proline 38, proline 42, and proline 49. Residue histidine 54 is part of the active site. A propeptide spans 98–130 (KREVTSHRATSIAHSRLWKTALDQKSFLNRKAR) (interchain peptide). Position 131 is a pyrrolidone carboxylic acid (glutamine 131). Proline 137 bears the 4-hydroxyproline mark.

It belongs to the phospholipase A2 family. Group IX subfamily. Heterodimer of an alpha and a beta chain; probably disulfide-linked. Requires Ca(2+) as cofactor. In terms of tissue distribution, expressed by the venom duct.

Its subcellular location is the secreted. The catalysed reaction is a 1,2-diacyl-sn-glycero-3-phosphocholine + H2O = a 1-acyl-sn-glycero-3-phosphocholine + a fatty acid + H(+). In terms of biological role, catalyzes the calcium-dependent hydrolysis of the 2-acyl groups in 3-sn-phosphoglycerides. The chain is Conodipine-P2 from Conus purpurascens (Purple cone).